A 153-amino-acid polypeptide reads, in one-letter code: Movement protein (153 aa).

Disordered regions lie at residues 1 to 24 (MAQEGGAVEQFGQWLWSNPIEQDP) and 107 to 153 (ALSL…RNQR). Composition is skewed to polar residues over residues 109–122 (SLLSSTPRASNQPW) and 140–153 (GQRQLMGRNSRNQR).

Belongs to the luteoviruses movement protein family.

It is found in the host nucleus envelope. Functionally, transports viral genome to neighboring plant cells directly through plasmosdesmata, without any budding. The movement protein allows efficient cell to cell propagation, by bypassing the host cell wall barrier. Acts as a suppressor of RNA-mediated gene silencing, also known as post-transcriptional gene silencing (PTGS), a mechanism of plant viral defense that limits the accumulation of viral RNAs. This is Movement protein from Avena byzantina (Oat).